The chain runs to 707 residues: Nucleolin 2 (707 aa).

The tract at residues 1-446 (MGKSSKKSAV…TPASNQNQAT (446 aa)) is disordered. 2 stretches are compositionally biased toward basic and acidic residues: residues 30–40 (RNAEDEIEKAV) and 47–60 (TVREKVVPSKEEAK). 3 stretches are compositionally biased toward acidic residues: residues 75–85 (SSEEDSSESEE), 108–120 (SSDDSSDDSSSDD), and 144–153 (DSSDESLSDD). Residues 158–170 (KPAAPLKKPVALA) show a composition bias toward low complexity. 3 stretches are compositionally biased toward acidic residues: residues 219-232 (DSSDSDSDSESDED), 248-263 (SESSDSESDSDSDDEA), and 271-287 (ESSDSSDSDSESESDSD). Residues 300 to 311 (LTKDTKKGQSKD) show a composition bias toward basic and acidic residues. The span at 312–326 (ESEDSSDESSEESGD) shows a compositional bias: acidic residues. Residues 336–347 (STTSGTTKPSPK) show a composition bias toward low complexity. Over residues 355 to 370 (SDDESDEDDSSDESSD) the composition is skewed to acidic residues. The segment covering 376–394 (KQTQAKKQAPVAQESSSSD) has biased composition (low complexity). The segment covering 395 to 406 (ESSEEDSDMESD) has biased composition (acidic residues). The segment covering 407-417 (EPAKTPQKKET) has biased composition (basic and acidic residues). Residues 420–429 (SVGSNKSATK) show a composition bias toward polar residues. One can recognise an RRM 1 domain in the interval 449-525 (KTLFVGNLPY…RPVRLDLARE (77 aa)). Disordered regions lie at residues 527–546 (GAYTPGSGRDNSSFKKPAQS) and 629–707 (RPRP…GDDD). An RRM 2 domain is found at 549–630 (NTIFIKGFDT…YSLYVDEARP (82 aa)). The span at 657–681 (GRGDGSRGRGDRGRGRGFGRGDRGH) shows a compositional bias: basic and acidic residues.

The protein localises to the nucleus. The protein resides in the nucleolus. Functionally, involved in pre-rRNA processing and ribosome assembly. The polypeptide is Nucleolin 2 (Oryza sativa subsp. japonica (Rice)).